The primary structure comprises 434 residues: Purple acid phosphatase 22 (434 aa).

A signal peptide spans 1–22; it reads MKLFGLFLSFTLLFLCPFISQA. N-linked (GlcNAc...) asparagine glycosylation is present at N116. Fe cation-binding residues include D148, D175, and Y178. D175 is a binding site for Zn(2+). Positions 208 and 292 each coordinate Zn(2+). A substrate-binding site is contributed by N208. H302 functions as the Proton donor in the catalytic mechanism. H329 contributes to the Zn(2+) binding site. Residue 329–331 coordinates substrate; that stretch reads HVH. H331 is a Fe cation binding site. N403 carries an N-linked (GlcNAc...) asparagine glycan.

The protein belongs to the metallophosphoesterase superfamily. Purple acid phosphatase family. In terms of assembly, homodimer. Fe cation serves as cofactor. The cofactor is Zn(2+). Expressed in roots, stems, leaves, flowers and siliques.

The protein resides in the secreted. The enzyme catalyses a phosphate monoester + H2O = an alcohol + phosphate. This is Purple acid phosphatase 22 (PAP22) from Arabidopsis thaliana (Mouse-ear cress).